The following is a 377-amino-acid chain: D-alanine--D-alanine ligase (377 aa).

The ATP-grasp domain occupies 137–346 (KELMTVNGIR…RSQQAEKLIQ (210 aa)). 167-222 (SKQLGEVVFVKAANQGSSVGVSRVTNAEEYENALRDSFQYDEKLLVEKAVESPTEL) provides a ligand contact to ATP. Asp-300, Glu-313, and Asn-315 together coordinate Mg(2+).

It belongs to the D-alanine--D-alanine ligase family. Mg(2+) is required as a cofactor. Requires Mn(2+) as cofactor.

It localises to the cytoplasm. It carries out the reaction 2 D-alanine + ATP = D-alanyl-D-alanine + ADP + phosphate + H(+). It functions in the pathway cell wall biogenesis; peptidoglycan biosynthesis. Cell wall formation. The polypeptide is D-alanine--D-alanine ligase (Oenococcus oeni (strain ATCC BAA-331 / PSU-1)).